The sequence spans 114 residues: Putative movement protein (114 aa).

The helical transmembrane segment at 27–47 (LIGIILLVTVCLTVLWVCIML) threads the bilayer. The segment at 79-114 (RTPFEATGPERERNWEARRQSTTVNPASQPNTGSVF) is disordered. Over residues 86-97 (GPERERNWEARR) the composition is skewed to basic and acidic residues. A compositionally biased stretch (polar residues) spans 98-114 (QSTTVNPASQPNTGSVF).

Belongs to the nanovirus movement protein family.

It is found in the host cell membrane. Functionally, may transport viral genome to neighboring plant cells directly through plasmosdesmata, without any budding. The movement protein allows efficient cell to cell propagation, by bypassing the host cell wall barrier. This chain is Putative movement protein (DNA-M), found in Faba bean necrotic yellows virus (isolate Egyptian EV1-93) (FBNYV).